The following is a 364-amino-acid chain: Zinc transporter 3 (364 aa).

The N-terminal stretch at 1–23 (MGAKKHTLQVLPWLLLFAQHTAA) is a signal peptide. The Extracellular portion of the chain corresponds to 24-44 (SACDCANTTDGADRQGAMKLK). N-linked (GlcNAc...) asparagine glycosylation is present at N30. Residues 45–65 (LIAIASILAAGAAGVLVPVIG) traverse the membrane as a helical segment. Over 66 to 76 (RSMAALRPDGD) the chain is Cytoplasmic. The chain crosses the membrane as a helical span at residues 77–97 (IFFAVKAFAAGVILATGMVHI). The Extracellular portion of the chain corresponds to 98–119 (LPAAFDALTSPCLKRGGGDRNP). A helical transmembrane segment spans residues 120-140 (FPFAGLVSMSAAVSTMVVDSL). Over 141–213 (AAGYYHRSQF…ESIRHKVVSQ (73 aa)) the chain is Cytoplasmic. A helical membrane pass occupies residues 214-234 (VLELGILVHSVIIGVSLGASV). The Extracellular portion of the chain corresponds to 235–241 (RPSTIRP). Residues 242 to 262 (LVGALSFHQFFEGVGLGGCIV) traverse the membrane as a helical segment. At 263-271 (QANFKVRAT) the chain is on the cytoplasmic side. A helical membrane pass occupies residues 272–292 (VIMAIFFSLTAPVGIVLGIAI). The Extracellular portion of the chain corresponds to 293–303 (SSSYNVHSSTA). A helical transmembrane segment spans residues 304–324 (FVVEGVFNSASAGILIYMSLV). Residues 325–343 (DLLATDFNNPKLQINTKLQ) lie on the Cytoplasmic side of the membrane. Residues 344-364 (LMAYLALFLGAGLMSMLAIWA) form a helical membrane-spanning segment.

The protein belongs to the ZIP transporter (TC 2.A.5) family. As to expression, expressed in vascular bundles of stems.

It is found in the cell membrane. In terms of biological role, zinc transporter that may mediate zinc uptake from the rhizosphere. Seems specific to zinc ions and may not transport other divalent cations. In Oryza sativa subsp. japonica (Rice), this protein is Zinc transporter 3 (ZIP3).